The primary structure comprises 130 residues: Large ribosomal subunit protein bL19 (130 aa).

This sequence belongs to the bacterial ribosomal protein bL19 family.

In terms of biological role, this protein is located at the 30S-50S ribosomal subunit interface and may play a role in the structure and function of the aminoacyl-tRNA binding site. The polypeptide is Large ribosomal subunit protein bL19 (Burkholderia orbicola (strain MC0-3)).